A 312-amino-acid polypeptide reads, in one-letter code: Calcium-independent mitochondrial carrier protein SCaMC-3L (312 aa).

Solcar repeat units follow at residues 27-113 (GTLW…SRNF), 121-206 (PSFQ…LRCL), and 217-304 (PSGL…MKKT). The next 6 helical transmembrane spans lie at 33-50 (LLSG…TAPL), 88-107 (GNGI…FSVF), 131-144 (SLAV…INPM), 182-200 (YLPN…LAVY), 219-243 (GLVS…LTLV), and 279-298 (GMTP…YLVY).

The protein belongs to the mitochondrial carrier (TC 2.A.29) family. Mainly expressed in testis and at lesser levels in brain.

It localises to the mitochondrion inner membrane. The enzyme catalyses Mg(2+)(out) + phosphate(in) + ATP(out) = Mg(2+)(in) + phosphate(out) + ATP(in). It catalyses the reaction ADP(out) + phosphate(in) + H(+)(out) = ADP(in) + phosphate(out) + H(+)(in). In terms of biological role, calcium-independent ATP-Mg/Pi exchanger that catalyzes the electroneutral exchange of Mg-ATP or free ADP against an hydrogenphosphate and participates in the net transport of adenine nucleotides across the mitochondria inner membrane. The polypeptide is Calcium-independent mitochondrial carrier protein SCaMC-3L (Rattus norvegicus (Rat)).